Reading from the N-terminus, the 634-residue chain is Probable potassium transport system protein Kup (634 aa).

The next 12 helical transmembrane spans lie at 21–41 (IILSAIGVVFGDIGTSPLYTL), 61–81 (ILSLIFWAMMLVVTIKYVAVI), 110–130 (IYIVGILGIFGTSLFFGDGVI), 148–168 (PHMKAFVVPITLAVLILLFLC), 180–200 (FGPITLLWFIAIGVVGVYNIA), 217–237 (FFLEHGWHSMFVLGAVVLAVT), 258–278 (WMYVVLPMLALNYLGQGALVL), 296–316 (GLYPMIALATAAAVIASQALI), 348–368 (IYVPTVNWTLLTLVILTVIGF), 377–397 (AYGVAVTGTMMITTVLMIIYA), 408–428 (LWMMAIVFIAVDGAFFYANII), and 432–452 (DGAWFPLLLGVVIFTFMRTWL).

The protein belongs to the HAK/KUP transporter (TC 2.A.72) family.

The protein resides in the cell inner membrane. The enzyme catalyses K(+)(in) + H(+)(in) = K(+)(out) + H(+)(out). Functionally, transport of potassium into the cell. Likely operates as a K(+):H(+) symporter. In Xylella fastidiosa (strain 9a5c), this protein is Probable potassium transport system protein Kup.